The primary structure comprises 288 residues: MSQFSFTKMHGLGNSYIYVNMFEEQIPEEDLALVAEKVSNINTGIGADGMILICPSDVAPVKMRMFNNDGSEGKSCGNGLRCVAKYAYEHKLVEETVFTIETLAGIVTAEVTVEDGVVTLAKIDMGAPRLTRAEIPMLGEGETPFIRENFLYNNHRYAFTAVSMGNPHAVIFVDDVEKAPLTTLGPVLETHEMFPERVNVEFIEILNDDEMNFRVWERGSGVTQACGTGACAAVVAAILNGKMERGKEITVHLAGGDLMIAWTEEGNVLMKGPAEVICRGVYEYKIEA.

Asn14 and Asn67 together coordinate substrate. Cys76 (proton donor) is an active-site residue. Residues 77–78 (GN), Asn166, Asn199, and 217–218 (ER) each bind substrate. The Proton acceptor role is filled by Cys226. 227-228 (GT) lines the substrate pocket.

The protein belongs to the diaminopimelate epimerase family. In terms of assembly, homodimer.

The protein resides in the cytoplasm. It carries out the reaction (2S,6S)-2,6-diaminopimelate = meso-2,6-diaminopimelate. Its pathway is amino-acid biosynthesis; L-lysine biosynthesis via DAP pathway; DL-2,6-diaminopimelate from LL-2,6-diaminopimelate: step 1/1. In terms of biological role, catalyzes the stereoinversion of LL-2,6-diaminopimelate (L,L-DAP) to meso-diaminopimelate (meso-DAP), a precursor of L-lysine and an essential component of the bacterial peptidoglycan. This chain is Diaminopimelate epimerase, found in Bacillus cereus (strain B4264).